The primary structure comprises 159 residues: GDP-mannose mannosyl hydrolase (159 aa).

Substrate-binding positions include 2–3, F8, and R36; that span reads FL. A Nudix hydrolase domain is found at 13–153; the sequence is RSTPLVSLDF…SRAYFLAEKR (141 aa). G49, E69, and Q122 together coordinate Mg(2+). The Nudix box signature appears at 50–71; sequence GRVQKDETLEAAFERLTMAELG.

In terms of assembly, homodimer. The cofactor is Mg(2+).

It carries out the reaction GDP-alpha-D-mannose + H2O = D-mannose + GDP + H(+). Functionally, hydrolyzes both GDP-mannose and GDP-glucose. Could participate in the regulation of cell wall biosynthesis by influencing the concentration of GDP-mannose or GDP-glucose in the cell. Might also be involved in the biosynthesis of the slime polysaccharide colanic acid. The sequence is that of GDP-mannose mannosyl hydrolase from Escherichia coli (strain K12).